Here is a 611-residue protein sequence, read N- to C-terminus: Actin-binding LIM protein 2 (611 aa).

4 LIM zinc-binding domains span residues 22-81 (ILCN…LYGT), 81-141 (TRCF…VSVG), 151-210 (RSCG…KFGI), and 210-270 (IRCD…ARTE). Cysteine 83, cysteine 86, histidine 103, cysteine 106, cysteine 109, cysteine 112, cysteine 131, and cysteine 134 together coordinate Zn(2+). Positions 212, 215, 232, 235, 238, 241, 260, and 263 each coordinate Zn(2+). Over residues 269–278 (TEDRNKETRT) the composition is skewed to basic and acidic residues. 2 disordered regions span residues 269–295 (TEDR…SGSP) and 336–527 (YISH…DQRN). Low complexity-rich tracts occupy residues 279 to 295 (SSES…SGSP) and 363 to 372 (SSPSSTGSVS). A phosphoserine mark is found at serine 282, serine 294, serine 364, and serine 367. Residues 393–404 (SGRSTPSLSVLS) are compositionally biased toward polar residues. Serine 452 carries the post-translational modification Phosphoserine. The residue at position 472 (threonine 472) is a Phosphothreonine. A compositionally biased stretch (polar residues) spans 473-488 (RTNSPDLDTQSLSHSS). A phosphoserine mark is found at serine 476 and serine 578. The 69-residue stretch at 543-611 (MREYKIYPYD…NDLKKKALLF (69 aa)) folds into the HP domain.

As to quaternary structure, interacts with F-actin and ABRA. As to expression, highly expressed in skeletal muscle.

Its subcellular location is the cytoplasm. May act as scaffold protein. May stimulate ABRA activity and ABRA-dependent SRF transcriptional activity. The sequence is that of Actin-binding LIM protein 2 (ABLIM2) from Homo sapiens (Human).